The following is a 148-amino-acid chain: uncharacterized protein (148 aa).

Belongs to the serpin family. Poxviruses subfamily.

This is an uncharacterized protein from Fowlpox virus (strain NVSL) (FPV).